Consider the following 251-residue polypeptide: Hydroxyacylglutathione hydrolase (251 aa).

Zn(2+)-binding residues include His53, His55, Asp57, His58, His110, Asp127, and His165.

The protein belongs to the metallo-beta-lactamase superfamily. Glyoxalase II family. In terms of assembly, monomer. Zn(2+) serves as cofactor.

It catalyses the reaction an S-(2-hydroxyacyl)glutathione + H2O = a 2-hydroxy carboxylate + glutathione + H(+). The protein operates within secondary metabolite metabolism; methylglyoxal degradation; (R)-lactate from methylglyoxal: step 2/2. Thiolesterase that catalyzes the hydrolysis of S-D-lactoyl-glutathione to form glutathione and D-lactic acid. This chain is Hydroxyacylglutathione hydrolase, found in Serratia proteamaculans (strain 568).